A 649-amino-acid polypeptide reads, in one-letter code: DNA mismatch repair protein MutL (649 aa).

The disordered stretch occupies residues lysine 339 to threonine 414. The segment covering threonine 342–glutamate 360 has biased composition (basic and acidic residues). The span at proline 388–glutamine 402 shows a compositional bias: low complexity.

Belongs to the DNA mismatch repair MutL/HexB family.

Its function is as follows. This protein is involved in the repair of mismatches in DNA. It is required for dam-dependent methyl-directed DNA mismatch repair. May act as a 'molecular matchmaker', a protein that promotes the formation of a stable complex between two or more DNA-binding proteins in an ATP-dependent manner without itself being part of a final effector complex. This chain is DNA mismatch repair protein MutL, found in Bacillus cytotoxicus (strain DSM 22905 / CIP 110041 / 391-98 / NVH 391-98).